The following is a 587-amino-acid chain: Glutamine--tRNA ligase (587 aa).

The short motif at 58 to 68 (PEPNGYLHIGH) is the 'HIGH' region element. Residues 59 to 61 (EPN) and 65 to 71 (HIGHAKS) each bind ATP. The L-glutamine site is built by aspartate 91 and tyrosine 240. ATP-binding positions include threonine 259 and 294-295 (RL). Positions 301-305 (VTSKR) match the 'KMSKS' region motif.

This sequence belongs to the class-I aminoacyl-tRNA synthetase family. As to quaternary structure, monomer.

The protein resides in the cytoplasm. It catalyses the reaction tRNA(Gln) + L-glutamine + ATP = L-glutaminyl-tRNA(Gln) + AMP + diphosphate. This chain is Glutamine--tRNA ligase, found in Bordetella pertussis (strain Tohama I / ATCC BAA-589 / NCTC 13251).